The sequence spans 335 residues: Tetraacyldisaccharide 4'-kinase (335 aa).

59–66 lines the ATP pocket; that stretch reads TAGGNGKT.

It belongs to the LpxK family.

It catalyses the reaction a lipid A disaccharide + ATP = a lipid IVA + ADP + H(+). The protein operates within glycolipid biosynthesis; lipid IV(A) biosynthesis; lipid IV(A) from (3R)-3-hydroxytetradecanoyl-[acyl-carrier-protein] and UDP-N-acetyl-alpha-D-glucosamine: step 6/6. Transfers the gamma-phosphate of ATP to the 4'-position of a tetraacyldisaccharide 1-phosphate intermediate (termed DS-1-P) to form tetraacyldisaccharide 1,4'-bis-phosphate (lipid IVA). In Vibrio parahaemolyticus serotype O3:K6 (strain RIMD 2210633), this protein is Tetraacyldisaccharide 4'-kinase.